We begin with the raw amino-acid sequence, 971 residues long: Translation initiation factor IF-2 (971 aa).

The span at 48 to 63 (DHLRKSHGATDGDKRK) shows a compositional bias: basic and acidic residues. Disordered stretches follow at residues 48–86 (DHLR…ARTI) and 100–381 (DDVA…STFQ). Over residues 105 to 114 (GADQGQAQVA) the composition is skewed to low complexity. Residues 121-181 (ELKRREEEAR…EEEAATKRAA (61 aa)) are compositionally biased toward basic and acidic residues. Residues 182–202 (AEVAAAQQQAAAQQAAAEQEA) are compositionally biased toward low complexity. Over residues 210 to 261 (DEARAAAERAAQREAAKKAEDAAREAADKARAEQEEISKRRAAAEAEARAIR) the composition is skewed to basic and acidic residues. The segment covering 277-286 (PPKPVEPPKP) has biased composition (pro residues). Low complexity predominate over residues 304–326 (ARPAVKKPAGAAAPATTQAPAGA). Over residues 356–369 (SSGGVDRGWRGGPK) the composition is skewed to gly residues. A tr-type G domain is found at 471–640 (PRPPVVTVMG…LLQAEVLELK (170 aa)). Positions 480–487 (GHVDHGKT) are G1. 480-487 (GHVDHGKT) contacts GTP. Residues 505–509 (GITQH) are G2. The tract at residues 526–529 (DTPG) is G3. Residues 526–530 (DTPGH) and 580–583 (NKID) each bind GTP. The segment at 580 to 583 (NKID) is G4. The tract at residues 616 to 618 (SAK) is G5.

This sequence belongs to the TRAFAC class translation factor GTPase superfamily. Classic translation factor GTPase family. IF-2 subfamily.

The protein resides in the cytoplasm. Its function is as follows. One of the essential components for the initiation of protein synthesis. Protects formylmethionyl-tRNA from spontaneous hydrolysis and promotes its binding to the 30S ribosomal subunits. Also involved in the hydrolysis of GTP during the formation of the 70S ribosomal complex. This Burkholderia orbicola (strain AU 1054) protein is Translation initiation factor IF-2.